The sequence spans 317 residues: Melanocyte-stimulating hormone receptor (317 aa).

Over 1–37 the chain is Extracellular; that stretch reads MAVQGSQRRLLGSLNSTPTAIPQLGLAANQTGAWCLE. N-linked (GlcNAc...) asparagine glycosylation is present at asparagine 29. The helical transmembrane segment at 38–63 threads the bilayer; that stretch reads VSIPDGLFLSLGLVSLVENVLVVATI. Residues 64-72 are Cytoplasmic-facing; sequence AKNRNLHSP. The chain crosses the membrane as a helical span at residues 73-93; the sequence is MYCFICCLALSDLLVSGGNVL. The Extracellular segment spans residues 94 to 118; sequence ETAVILLLEAGALAARAAVVQQLDN. Residues 119-140 traverse the membrane as a helical segment; sequence VIDVITCSSMLSSLCFLGAIAV. Topologically, residues 141-163 are cytoplasmic; it reads DRYISIFYALRYHSIVTLPRARR. A helical membrane pass occupies residues 164–183; that stretch reads AIAAIWVASVLFSTLFIAYY. Over 184–191 the chain is Extracellular; that stretch reads DHAAVLLC. The chain crosses the membrane as a helical span at residues 192 to 211; that stretch reads LVVFFLAMLVLMAVLYVHML. The Cytoplasmic portion of the chain corresponds to 212-240; it reads ARACQHAQGIARLHKRQRPVHQGFGLKGA. Residues 241–266 form a helical membrane-spanning segment; that stretch reads VTLTILLGIFFLCWGPFFLHLTLIVL. Residues 267-279 lie on the Extracellular side of the membrane; sequence CPQHPTCSCIFKN. Residues 280-300 form a helical membrane-spanning segment; that stretch reads FNLFLALIICNAIIDPLIYAF. At 301–317 the chain is on the cytoplasmic side; the sequence is RSQELRRTLKEVLTCSW. Residue cysteine 315 is the site of S-palmitoyl cysteine attachment.

It belongs to the G-protein coupled receptor 1 family. Interacts with MGRN1, but does not undergo MGRN1-mediated ubiquitination; this interaction competes with GNAS-binding and thus inhibits agonist-induced cAMP production. Interacts with OPN3; the interaction results in a decrease in MC1R-mediated cAMP signaling and ultimately a decrease in melanin production in melanocytes.

It is found in the cell membrane. Its function is as follows. Receptor for MSH (alpha, beta and gamma) and ACTH. The activity of this receptor is mediated by G proteins which activate adenylate cyclase. Mediates melanogenesis, the production of eumelanin (black/brown) and phaeomelanin (red/yellow), via regulation of cAMP signaling in melanocytes. This chain is Melanocyte-stimulating hormone receptor (MC1R), found in Pongo pygmaeus (Bornean orangutan).